We begin with the raw amino-acid sequence, 128 residues long: MGRLFVIDLEGLVYSCKYCQTHFAVTNDIISKSFHCKHGRAYLFDNVVNVTVGEKEHRVMITGWHTVADIFCVSCGSLVGWKYEIAYDKSQKYKEGKFILERFKVLGPYGGGYDMNQNEPMTGSDDEE.

The 98-residue stretch at 12–109 (LVYSCKYCQT…LERFKVLGPY (98 aa)) folds into the Yippee domain. Cys16, Cys19, Cys72, and Cys75 together coordinate Zn(2+).

Belongs to the yippee family.

This Arabidopsis thaliana (Mouse-ear cress) protein is Protein yippee-like At3g08990.